Here is a 417-residue protein sequence, read N- to C-terminus: Carboxypeptidase B (417 aa).

The N-terminal stretch at 1–16 (MLAFLILVTVTLASAH) is a signal peptide. Residues 17-110 (HSGEHFEGDK…LEAQFDSRVR (94 aa)) constitute a propeptide, activation peptide. Positions 118–412 (KYNNWETIEA…LAIKYVTSYV (295 aa)) constitute a Peptidase M14 domain. C173 and C186 are disulfide-bonded. Zn(2+) is bound by residues H176 and E179. Residues 176–179 (HARE), R234, and 251–252 (NR) contribute to the substrate site. 2 disulfide bridges follow: C245/C268 and C259/C273. H304 contacts Zn(2+). Substrate-binding positions include 305-306 (SY) and Y356. The Proton donor/acceptor role is filled by E378.

Belongs to the peptidase M14 family. The cofactor is Zn(2+).

It is found in the secreted. The protein localises to the zymogen granule lumen. The catalysed reaction is Preferential release of a C-terminal lysine or arginine amino acid.. This Bos taurus (Bovine) protein is Carboxypeptidase B (CPB1).